The chain runs to 128 residues: Large ribosomal subunit protein bL12 (128 aa).

This sequence belongs to the bacterial ribosomal protein bL12 family. As to quaternary structure, homodimer. Part of the ribosomal stalk of the 50S ribosomal subunit. Forms a multimeric L10(L12)X complex, where L10 forms an elongated spine to which 2 to 4 L12 dimers bind in a sequential fashion. Binds GTP-bound translation factors.

Forms part of the ribosomal stalk which helps the ribosome interact with GTP-bound translation factors. Is thus essential for accurate translation. This is Large ribosomal subunit protein bL12 from Methylobacillus flagellatus (strain ATCC 51484 / DSM 6875 / VKM B-1610 / KT).